The following is a 331-amino-acid chain: MLIAQRPTLTEESLNPQRSRFTIEPLEPGFGYTLGNSLRRTLLSSIPGAAVTSVRISGALHEFTTLPGVQEDVTEILLNIKGIVLTSEYDEPVVMYLRKSGKGEAVAGDITPPAGVTIANPEQHIATLADDGELEIEFTVERGRGYVPAQMNKQDNDEIGRIPVDSIYSPVLKVSYKVEATRVEQRTDFDKLILDVETKPAISPRDAVASAGSTLVELFGLCRELNAQAEGVEVGPAPVAEETNPEMAVPIEDLNLTQRSYNCLKREGIHTIGELVSHTEQDLLDIRNFGMKSIDEVKEKLQTLGLSLKSSPMAFDTNNLEGGTFFSPEDE.

Residues 1–226 (MLIAQRPTLT…ELFGLCRELN (226 aa)) are alpha N-terminal domain (alpha-NTD). The segment at 243–331 (TNPEMAVPIE…GGTFFSPEDE (89 aa)) is alpha C-terminal domain (alpha-CTD).

It belongs to the RNA polymerase alpha chain family. In terms of assembly, homodimer. The RNAP catalytic core consists of 2 alpha, 1 beta, 1 beta' and 1 omega subunit. When a sigma factor is associated with the core the holoenzyme is formed, which can initiate transcription.

It catalyses the reaction RNA(n) + a ribonucleoside 5'-triphosphate = RNA(n+1) + diphosphate. DNA-dependent RNA polymerase catalyzes the transcription of DNA into RNA using the four ribonucleoside triphosphates as substrates. This is DNA-directed RNA polymerase subunit alpha from Bifidobacterium longum (strain NCC 2705).